Consider the following 235-residue polypeptide: Phosphoribosylaminoimidazole-succinocarboxamide synthase (235 aa).

Belongs to the SAICAR synthetase family.

The enzyme catalyses 5-amino-1-(5-phospho-D-ribosyl)imidazole-4-carboxylate + L-aspartate + ATP = (2S)-2-[5-amino-1-(5-phospho-beta-D-ribosyl)imidazole-4-carboxamido]succinate + ADP + phosphate + 2 H(+). It functions in the pathway purine metabolism; IMP biosynthesis via de novo pathway; 5-amino-1-(5-phospho-D-ribosyl)imidazole-4-carboxamide from 5-amino-1-(5-phospho-D-ribosyl)imidazole-4-carboxylate: step 1/2. In Thermococcus kodakarensis (strain ATCC BAA-918 / JCM 12380 / KOD1) (Pyrococcus kodakaraensis (strain KOD1)), this protein is Phosphoribosylaminoimidazole-succinocarboxamide synthase.